We begin with the raw amino-acid sequence, 500 residues long: Proline--tRNA ligase (500 aa).

This sequence belongs to the class-II aminoacyl-tRNA synthetase family. ProS type 3 subfamily. Homodimer.

Its subcellular location is the cytoplasm. It carries out the reaction tRNA(Pro) + L-proline + ATP = L-prolyl-tRNA(Pro) + AMP + diphosphate. In terms of biological role, catalyzes the attachment of proline to tRNA(Pro) in a two-step reaction: proline is first activated by ATP to form Pro-AMP and then transferred to the acceptor end of tRNA(Pro). This Paramagnetospirillum magneticum (strain ATCC 700264 / AMB-1) (Magnetospirillum magneticum) protein is Proline--tRNA ligase.